The primary structure comprises 313 residues: Methionyl-tRNA formyltransferase (313 aa).

109 to 112 (SLLP) is a (6S)-5,6,7,8-tetrahydrofolate binding site.

This sequence belongs to the Fmt family.

The catalysed reaction is L-methionyl-tRNA(fMet) + (6R)-10-formyltetrahydrofolate = N-formyl-L-methionyl-tRNA(fMet) + (6S)-5,6,7,8-tetrahydrofolate + H(+). Its function is as follows. Attaches a formyl group to the free amino group of methionyl-tRNA(fMet). The formyl group appears to play a dual role in the initiator identity of N-formylmethionyl-tRNA by promoting its recognition by IF2 and preventing the misappropriation of this tRNA by the elongation apparatus. The chain is Methionyl-tRNA formyltransferase from Thermotoga neapolitana (strain ATCC 49049 / DSM 4359 / NBRC 107923 / NS-E).